We begin with the raw amino-acid sequence, 811 residues long: DNA gyrase subunit A (811 aa).

The Topo IIA-type catalytic domain occupies 30–493 (LPDVRDGLKP…LEEDIGKEDL (464 aa)). Tyrosine 118 (O-(5'-phospho-DNA)-tyrosine intermediate) is an active-site residue. A GyrA-box motif is present at residues 520-526 (QGRGGRG).

It belongs to the type II topoisomerase GyrA/ParC subunit family. Heterotetramer, composed of two GyrA and two GyrB chains. In the heterotetramer, GyrA contains the active site tyrosine that forms a transient covalent intermediate with DNA, while GyrB binds cofactors and catalyzes ATP hydrolysis.

It is found in the cytoplasm. It catalyses the reaction ATP-dependent breakage, passage and rejoining of double-stranded DNA.. Its function is as follows. A type II topoisomerase that negatively supercoils closed circular double-stranded (ds) DNA in an ATP-dependent manner to modulate DNA topology and maintain chromosomes in an underwound state. Negative supercoiling favors strand separation, and DNA replication, transcription, recombination and repair, all of which involve strand separation. Also able to catalyze the interconversion of other topological isomers of dsDNA rings, including catenanes and knotted rings. Type II topoisomerases break and join 2 DNA strands simultaneously in an ATP-dependent manner. This Deinococcus deserti (strain DSM 17065 / CIP 109153 / LMG 22923 / VCD115) protein is DNA gyrase subunit A.